Reading from the N-terminus, the 464-residue chain is Protein FAM90A16 (464 aa).

Disordered stretches follow at residues 1-42, 70-389, and 415-437; these read MMAR…DPRL, PATL…HDGA, and HSPE…SEAP. Composition is skewed to basic and acidic residues over residues 74–89 and 97–114; these read GKKE…KPRV and NKDK…DPQR. Residues 180–197 are compositionally biased toward low complexity; the sequence is LASLSPLRKASLSSSSSL.

Belongs to the FAM90 family.

This Homo sapiens (Human) protein is Protein FAM90A16.